A 291-amino-acid chain; its full sequence is Geranyl diphosphate 2-C-methyltransferase (291 aa).

This sequence belongs to the geranyl diphosphate 2-C-methyltransferase family. It depends on Mg(2+) as a cofactor.

The enzyme catalyses (2E)-geranyl diphosphate + S-adenosyl-L-methionine = (E)-2-methylgeranyl diphosphate + S-adenosyl-L-homocysteine + H(+). Its function is as follows. Catalyzes the SAM-dependent methylation of geranyl diphosphate (GPP) to yield (E)-2-methylgeranyl diphosphate (2-MeGPP). The sequence is that of Geranyl diphosphate 2-C-methyltransferase from Streptomyces ambofaciens (strain ATCC 23877 / 3486 / DSM 40053 / JCM 4204 / NBRC 12836 / NRRL B-2516).